The primary structure comprises 115 residues: Putative HNH nuclease YajD (115 aa).

The HNH domain occupies 27-75; the sequence is CGRCSREFVYSNLRELTVHHIDHDHTNNPEDGSNWELLCLYCHDHEHSK.

This sequence belongs to the HNH nuclease family.

The chain is Putative HNH nuclease YajD (yajD) from Escherichia coli O157:H7.